The primary structure comprises 407 residues: tRNA(Ile)-lysidine synthase (407 aa).

36-41 (SGGRDS) contributes to the ATP binding site.

The protein belongs to the tRNA(Ile)-lysidine synthase family.

The protein localises to the cytoplasm. It carries out the reaction cytidine(34) in tRNA(Ile2) + L-lysine + ATP = lysidine(34) in tRNA(Ile2) + AMP + diphosphate + H(+). Functionally, ligates lysine onto the cytidine present at position 34 of the AUA codon-specific tRNA(Ile) that contains the anticodon CAU, in an ATP-dependent manner. Cytidine is converted to lysidine, thus changing the amino acid specificity of the tRNA from methionine to isoleucine. The sequence is that of tRNA(Ile)-lysidine synthase from Tropheryma whipplei (strain TW08/27) (Whipple's bacillus).